Consider the following 188-residue polypeptide: Adenine phosphoribosyltransferase (188 aa).

It belongs to the purine/pyrimidine phosphoribosyltransferase family. In terms of assembly, homodimer.

It is found in the cytoplasm. It catalyses the reaction AMP + diphosphate = 5-phospho-alpha-D-ribose 1-diphosphate + adenine. It participates in purine metabolism; AMP biosynthesis via salvage pathway; AMP from adenine: step 1/1. Functionally, catalyzes a salvage reaction resulting in the formation of AMP, that is energically less costly than de novo synthesis. This is Adenine phosphoribosyltransferase from Frankia casuarinae (strain DSM 45818 / CECT 9043 / HFP020203 / CcI3).